We begin with the raw amino-acid sequence, 428 residues long: GTPase Obg (428 aa).

The region spanning 1–158 is the Obg domain; the sequence is MFVDQVKIYV…RDVILELKVL (158 aa). Residues 159–329 form the OBG-type G domain; the sequence is ADVGLVGFPS…LLFEVANLIE (171 aa). GTP-binding positions include 165–172, 190–194, 212–215, 282–285, and 310–312; these read GFPSVGKS, FTTIV, DLPG, NKMD, and SAV. Residues serine 172 and threonine 192 each contribute to the Mg(2+) site. Residues 350-428 form the OCT domain; it reads KFETEGVKFD…ILEYEFEFID (79 aa).

This sequence belongs to the TRAFAC class OBG-HflX-like GTPase superfamily. OBG GTPase family. In terms of assembly, monomer. Requires Mg(2+) as cofactor.

Its subcellular location is the cytoplasm. Its function is as follows. An essential GTPase which binds GTP, GDP and possibly (p)ppGpp with moderate affinity, with high nucleotide exchange rates and a fairly low GTP hydrolysis rate. Plays a role in control of the cell cycle, stress response, ribosome biogenesis and in those bacteria that undergo differentiation, in morphogenesis control. This Bacillus thuringiensis (strain Al Hakam) protein is GTPase Obg.